The primary structure comprises 152 residues: Transcriptional regulator MraZ (152 aa).

SpoVT-AbrB domains lie at 5–52 (INAI…TAAQ) and 81–124 (ATDV…NKEL).

The protein belongs to the MraZ family. In terms of assembly, forms oligomers.

The protein localises to the cytoplasm. It localises to the nucleoid. This chain is Transcriptional regulator MraZ, found in Legionella pneumophila (strain Paris).